Here is a 466-residue protein sequence, read N- to C-terminus: Probable ribonuclease FAU-1 (466 aa).

An S1 motif domain is found at 90-152; sequence GAIYAGTVTD…TDGRPVLDTT (63 aa).

The protein belongs to the FAU-1 family.

In terms of biological role, probable RNase involved in rRNA stability through maturation and/or degradation of precursor rRNAs. Binds to RNA in loop regions with AU-rich sequences. This Haloarcula marismortui (strain ATCC 43049 / DSM 3752 / JCM 8966 / VKM B-1809) (Halobacterium marismortui) protein is Probable ribonuclease FAU-1.